We begin with the raw amino-acid sequence, 346 residues long: UPF0065 protein in the TAR-I ttuE-ttuC' intergenic region (346 aa).

An N-terminal signal peptide occupies residues 1 to 46; that stretch reads MQASMLDSQWRLTIFSPRRKVKVSQMNSRFIAVLLTATILPWVAQA.

This sequence belongs to the UPF0065 (bug) family.

It is found in the periplasm. In Agrobacterium vitis (Rhizobium vitis), this protein is UPF0065 protein in the TAR-I ttuE-ttuC' intergenic region.